A 603-amino-acid chain; its full sequence is Proline--tRNA ligase (603 aa).

The protein belongs to the class-II aminoacyl-tRNA synthetase family. ProS type 1 subfamily. Homodimer.

It is found in the cytoplasm. The catalysed reaction is tRNA(Pro) + L-proline + ATP = L-prolyl-tRNA(Pro) + AMP + diphosphate. Its function is as follows. Catalyzes the attachment of proline to tRNA(Pro) in a two-step reaction: proline is first activated by ATP to form Pro-AMP and then transferred to the acceptor end of tRNA(Pro). As ProRS can inadvertently accommodate and process non-cognate amino acids such as alanine and cysteine, to avoid such errors it has two additional distinct editing activities against alanine. One activity is designated as 'pretransfer' editing and involves the tRNA(Pro)-independent hydrolysis of activated Ala-AMP. The other activity is designated 'posttransfer' editing and involves deacylation of mischarged Ala-tRNA(Pro). The misacylated Cys-tRNA(Pro) is not edited by ProRS. In Microcystis aeruginosa (strain NIES-843 / IAM M-2473), this protein is Proline--tRNA ligase.